Reading from the N-terminus, the 898-residue chain is Interleukin enhancer-binding factor 3-B (898 aa).

The 375-residue stretch at 5–379 (RIFLNDDRHV…ALKRPIEEDG (375 aa)) folds into the DZF domain. Disordered regions lie at residues 52-87 (QEKD…NPTR), 374-403 (PIEE…PPQA), 468-529 (LPTG…VMEL), 627-651 (PPPQ…RGGF), and 711-799 (GEGY…QGAA). The span at 61 to 71 (ENPEPEETETT) shows a compositional bias: acidic residues. Basic and acidic residues-rich tracts occupy residues 72 to 81 (EEGKDSEAKT) and 374 to 384 (PIEEDGEDKSP). Residues 372-390 (KRPIEEDGEDKSPSKKKKK) carry the Bipartite nuclear localization signal motif. One can recognise a DRBM 1 domain in the interval 399–468 (EPPQAMNALM…AVKVLQDMGL (70 aa)). The segment covering 474-483 (EKEESVDESE) has biased composition (acidic residues). Residues 489–513 (QTPSQTADSEQADSSAGDQSESGKQ) are compositionally biased toward polar residues. Positions 521–587 (HGKNPVMELN…ALSALEKLFP (67 aa)) constitute a DRBM 2 domain. Positions 637 to 651 (RGGMNRGRGRGRGGF) are enriched in gly residues. Residues 717 to 747 (PTPPKPFVKKPPPPQQQQQPPPQHASNPPKP) show a composition bias toward pro residues. Positions 749-782 (YNQGYQGHQGGQQQQQPQQQQQQTYNQNQYSNYG) are enriched in low complexity.

As to quaternary structure, a component of a ybx2/frgy2-containing mRNA-ribonucleoprotein (mRNP) complex. Also a component of the CCAAT box transcription factor (CBTF) complex. In terms of processing, phosphorylated. Phosphorylation affects nuclear translocation. Post-translationally, methylated by protein arginine N-methyltransferase 1 (prmt1b) in the RGG-rich domain. Methylation decreases DNA-binding and thereby decreases transcription of the gata2 gene, but does not regulate dsRNA binding or subcellular localization.

The protein localises to the nucleus. The protein resides in the cytoplasm. Its function is as follows. RNA-binding protein that plays an essential role in the biogenesis of circular RNAs (circRNAs) which are produced by back-splicing circularization of pre-mRNAs. Within the nucleus, promotes circRNAs processing by stabilizing the regulatory elements residing in the flanking introns of the circularized exons. Plays thereby a role in the back-splicing of a subset of circRNAs. As a consequence, participates in a wide range of transcriptional and post-transcriptional processes. Binds to poly-U elements and AU-rich elements (AREs) in the 3'-UTR of target mRNAs. Upon viral infection, ILF3 accumulates in the cytoplasm and participates in the innate antiviral response. Mechanistically, ILF3 becomes phosphorylated and activated by the double-stranded RNA-activated protein kinase/PKR which releases ILF3 from cellular mature circRNAs. In turn, unbound ILF3 molecules are able to interact with and thus inhibit viral mRNAs. Has a cytoplasmic role early in development as part of a ribonucleoprotein (mRNP) complex which may regulate mRNA transport and/or translation. Following nuclear localization at the mid-blastula transition, acts as a transcription factor and binds the 5'-CCAAT-3' promoter sequence to regulate transcription of the gata2 gene as a subunit of the CCAAT box transcription factor (CBTF). Its role as an mRNP component negatively regulates its activity as a transcription factor by precluding its nuclear localization. In Xenopus laevis (African clawed frog), this protein is Interleukin enhancer-binding factor 3-B (ilf3-b).